Reading from the N-terminus, the 795-residue chain is Myosin light chain kinase 3 (795 aa).

Residue serine 155 is modified to Phosphoserine. Disordered regions lie at residues 236 to 257 and 305 to 328; these read GPGQ…ASEN and SSGP…GDAL. Phosphoserine is present on residues serine 351 and serine 432. The tract at residues 367 to 452 is disordered; that stretch reads DQIPKGARPF…GPGRTEAGRL (86 aa). Residues 491 to 746 enclose the Protein kinase domain; it reads VSQHEVLGGG…ATQCLKHEWL (256 aa). ATP-binding positions include 497-505 and lysine 520; that span reads LGGGRFGQV. Aspartate 612 functions as the Proton acceptor in the catalytic mechanism.

It belongs to the protein kinase superfamily. CAMK Ser/Thr protein kinase family. Mg(2+) serves as cofactor. In terms of processing, phosphorylated on serine residues. As to expression, restricted to cardiomyocytes (at protein level). Down-regulated in heart after experimental myocardial infarction at the protein level; no significant changes at the mRNA level.

Its subcellular location is the cytoplasm. It carries out the reaction L-seryl-[myosin light chain] + ATP = O-phospho-L-seryl-[myosin light chain] + ADP + H(+). It catalyses the reaction L-threonyl-[myosin light chain] + ATP = O-phospho-L-threonyl-[myosin light chain] + ADP + H(+). Functionally, kinase that phosphorylates MYL2 in vitro. Has been proposed to be calmodulin-dependent, although MYL2 phosphorylation has also been observed in the presence or absence of calmodulin. Promotes sarcomere formation in cardiomyocytes and increases cardiomyocyte contractility. The chain is Myosin light chain kinase 3 (Mylk3) from Mus musculus (Mouse).